A 296-amino-acid chain; its full sequence is Probable 2-(5''-triphosphoribosyl)-3'-dephosphocoenzyme-A synthase (296 aa).

It belongs to the CitG/MdcB family.

The catalysed reaction is 3'-dephospho-CoA + ATP = 2'-(5''-triphospho-alpha-D-ribosyl)-3'-dephospho-CoA + adenine. The protein is Probable 2-(5''-triphosphoribosyl)-3'-dephosphocoenzyme-A synthase of Streptococcus mutans serotype c (strain ATCC 700610 / UA159).